A 104-amino-acid polypeptide reads, in one-letter code: Large ribosomal subunit protein eL36 (104 aa).

Belongs to the eukaryotic ribosomal protein eL36 family.

The chain is Large ribosomal subunit protein eL36 (RPL36) from Tetrahymena thermophila (strain SB210).